We begin with the raw amino-acid sequence, 495 residues long: UDP-N-acetylmuramoyl-L-alanyl-D-glutamate--2,6-diaminopimelate ligase (495 aa).

UDP-N-acetyl-alpha-D-muramoyl-L-alanyl-D-glutamate contacts are provided by residues Leu27, Ser29, and 44–46 (HQA). 116–122 (GTNGKTT) provides a ligand contact to ATP. UDP-N-acetyl-alpha-D-muramoyl-L-alanyl-D-glutamate contacts are provided by residues Asn157, 158–159 (TT), Ser185, Gln191, and Arg193. Lys225 is subject to N6-carboxylysine. Meso-2,6-diaminopimelate-binding positions include Arg390, 414–417 (DNPR), Gly465, and Glu469. Residues 414-417 (DNPR) carry the Meso-diaminopimelate recognition motif motif.

The protein belongs to the MurCDEF family. MurE subfamily. It depends on Mg(2+) as a cofactor. Post-translationally, carboxylation is probably crucial for Mg(2+) binding and, consequently, for the gamma-phosphate positioning of ATP.

It localises to the cytoplasm. It catalyses the reaction UDP-N-acetyl-alpha-D-muramoyl-L-alanyl-D-glutamate + meso-2,6-diaminopimelate + ATP = UDP-N-acetyl-alpha-D-muramoyl-L-alanyl-gamma-D-glutamyl-meso-2,6-diaminopimelate + ADP + phosphate + H(+). Its pathway is cell wall biogenesis; peptidoglycan biosynthesis. In terms of biological role, catalyzes the addition of meso-diaminopimelic acid to the nucleotide precursor UDP-N-acetylmuramoyl-L-alanyl-D-glutamate (UMAG) in the biosynthesis of bacterial cell-wall peptidoglycan. In Salmonella typhimurium (strain LT2 / SGSC1412 / ATCC 700720), this protein is UDP-N-acetylmuramoyl-L-alanyl-D-glutamate--2,6-diaminopimelate ligase.